A 75-amino-acid chain; its full sequence is Probable [Fe-S]-dependent transcriptional repressor (75 aa).

Cys-55, Cys-60, Cys-63, and Cys-72 together coordinate iron-sulfur cluster.

Belongs to the FeoC family.

Its function is as follows. May function as a transcriptional regulator that controls feoABC expression. This chain is Probable [Fe-S]-dependent transcriptional repressor, found in Serratia marcescens.